The sequence spans 299 residues: Proline iminopeptidase (299 aa).

Residues 26 to 272 enclose the AB hydrolase-1 domain; that stretch reads VLLLAGGPGF…QFLYCANGSH (247 aa). Ser103 (nucleophile) is an active-site residue. The active site involves Asp245. The active-site Proton donor is His272.

Belongs to the peptidase S33 family. As to quaternary structure, monomer.

It carries out the reaction Release of N-terminal proline from a peptide.. Functionally, releases the N-terminal proline from various substrates. The sequence is that of Proline iminopeptidase from Chitinophaga pinensis (strain ATCC 43595 / DSM 2588 / LMG 13176 / NBRC 15968 / NCIMB 11800 / UQM 2034).